The following is a 205-amino-acid chain: Probable thymidylate kinase (205 aa).

7–14 is a binding site for ATP; the sequence is GIDGAGKS.

This sequence belongs to the thymidylate kinase family.

It catalyses the reaction dTMP + ATP = dTDP + ADP. The protein is Probable thymidylate kinase of Thermococcus onnurineus (strain NA1).